We begin with the raw amino-acid sequence, 108 residues long: Nitrite reductase (NADH) small subunit (108 aa).

As to quaternary structure, associates with NirB.

It localises to the cytoplasm. The catalysed reaction is NH4(+) + 3 NAD(+) + 2 H2O = nitrite + 3 NADH + 5 H(+). Its function is as follows. Required for activity of the reductase. The protein is Nitrite reductase (NADH) small subunit (nirD) of Salmonella typhi.